The following is a 112-amino-acid chain: MNLYQVNELFVDVYSKQDYTDESQSRNRSSVRKIAWLELRGQKRIFVGDVRNGLNTSGLTKASSICSGVMEIPGYVVLLALGTLQSINAQPLSMEVGASWCGGASPALPWAH.

This is an uncharacterized protein from Caenorhabditis elegans.